The chain runs to 177 residues: RNA polymerase sigma-E factor (177 aa).

Positions 34–47 match the Polymerase core binding motif; it reads DLLQTALARTYGRW. Positions 128–147 form a DNA-binding region, H-T-H motif; that stretch reads TEETAAALGMSAGTVKSTLH.

Belongs to the sigma-70 factor family. ECF subfamily.

It is found in the cytoplasm. Its function is as follows. Sigma factors are initiation factors that promote the attachment of RNA polymerase to specific initiation sites and are then released. This sigma factor is required for normal cell wall integrity; it is recruited by RNA polymerase to transcribe genes with cell wall-related functions. It is also involved in the transcription of the dagA gene coding for an extracellular agar-degrading enzyme. The polypeptide is RNA polymerase sigma-E factor (sigE) (Streptomyces coelicolor (strain ATCC BAA-471 / A3(2) / M145)).